A 328-amino-acid polypeptide reads, in one-letter code: Nickel import system permease protein NikB (328 aa).

A run of 6 helical transmembrane segments spans residues 11–31, 104–124, 139–159, 170–190, 229–249, and 279–299; these read LIQM…LMKL, LLIS…LGII, VIST…LLFI, ILSQ…AYII, ILPI…GTVV, and VLFI…LTLL. In terms of domain architecture, ABC transmembrane type-1 spans 100–297; sequence APITLLISFS…IINTIADLLT (198 aa).

It belongs to the binding-protein-dependent transport system permease family. OppBC subfamily. As to quaternary structure, the complex is composed of two ATP-binding proteins (NikD and NikE), two transmembrane proteins (NikB and NikC) and a solute-binding protein (NikA).

Its subcellular location is the cell membrane. In terms of biological role, part of the ABC transporter complex NikABCDE (Opp2) involved in nickel import. Probably responsible for the translocation of the substrate across the membrane. The polypeptide is Nickel import system permease protein NikB (Staphylococcus aureus (strain MRSA252)).